Consider the following 889-residue polypeptide: Mixed-linked glucan synthase 2 (889 aa).

The tract at residues 34–53 (AGADGQNGRRSPVAKRVNDG) is disordered. 2 helical membrane-spanning segments follow: residues 93 to 113 (ILHPYRFLILLRLIAIVAFFA) and 123 to 143 (GVWLWTMSMVGDVWFGFSWVL). Residue Asp-213 is part of the active site. Positions 265–293 (ELMSDHRRVRREYEEFKVRIDSLSSTIRQ) form a coiled coil. Residues Asp-411 and Asp-413 each coordinate substrate. Residue Asp-579 is part of the active site. 6 helical membrane-spanning segments follow: residues 655 to 675 (TYPIVTVFIFFYNLFPVMWLI), 685 to 705 (FGEYLLYLVAVIAMIHVIGMF), 723 to 743 (FYMIGSTGVYPTAVLYMALKL), 777 to 797 (LLIPTIVIIVVNVAAVGVAVG), 811 to 831 (LAVLGMVFNVWILVLLYPFAL), and 842 to 862 (AVLFVAMAMAVAAVAAMYVAF).

This sequence belongs to the glycosyltransferase 2 family. Plant cellulose synthase-like F subfamily.

The protein resides in the golgi apparatus membrane. Catalyzes both beta-1,3 and beta-1,4 glycosidic linkage on beta-D-glucan. Essential for (1,3;1,4)-beta-D-glucans synthesis in grasses and cereals (Poaceae). The mixed-linked glucans (which are not present in walls of dicotyledons or most other monocotyledonous plants) are particularly important constituents of the walls of the starchy endosperm and aleurone cells of cereal grains such as oats, wheat, rice and barley. They can account for up to 70% by weight of the wall. The chain is Mixed-linked glucan synthase 2 (CSLF2) from Oryza sativa subsp. japonica (Rice).